A 126-amino-acid polypeptide reads, in one-letter code: Holo-[acyl-carrier-protein] synthase (126 aa).

Mg(2+) is bound by residues Asp-9 and Glu-58.

The protein belongs to the P-Pant transferase superfamily. AcpS family. Mg(2+) serves as cofactor.

The protein resides in the cytoplasm. The enzyme catalyses apo-[ACP] + CoA = holo-[ACP] + adenosine 3',5'-bisphosphate + H(+). Its function is as follows. Transfers the 4'-phosphopantetheine moiety from coenzyme A to a Ser of acyl-carrier-protein. The sequence is that of Holo-[acyl-carrier-protein] synthase from Escherichia coli O127:H6 (strain E2348/69 / EPEC).